The following is a 235-amino-acid chain: 2,3,4,5-tetrahydropyridine-2,6-dicarboxylate N-acetyltransferase (235 aa).

This sequence belongs to the transferase hexapeptide repeat family. DapH subfamily.

The catalysed reaction is (S)-2,3,4,5-tetrahydrodipicolinate + acetyl-CoA + H2O = L-2-acetamido-6-oxoheptanedioate + CoA. The protein operates within amino-acid biosynthesis; L-lysine biosynthesis via DAP pathway; LL-2,6-diaminopimelate from (S)-tetrahydrodipicolinate (acetylase route): step 1/3. Functionally, catalyzes the transfer of an acetyl group from acetyl-CoA to tetrahydrodipicolinate. The protein is 2,3,4,5-tetrahydropyridine-2,6-dicarboxylate N-acetyltransferase of Exiguobacterium sp. (strain ATCC BAA-1283 / AT1b).